The primary structure comprises 195 residues: Molybdenum cofactor guanylyltransferase (195 aa).

GTP-binding positions include 12 to 14 (LAG), lysine 25, asparagine 53, aspartate 70, and aspartate 100. Residue aspartate 100 participates in Mg(2+) binding.

Belongs to the MobA family. Monomer. Requires Mg(2+) as cofactor.

It is found in the cytoplasm. It catalyses the reaction Mo-molybdopterin + GTP + H(+) = Mo-molybdopterin guanine dinucleotide + diphosphate. Functionally, transfers a GMP moiety from GTP to Mo-molybdopterin (Mo-MPT) cofactor (Moco or molybdenum cofactor) to form Mo-molybdopterin guanine dinucleotide (Mo-MGD) cofactor. The protein is Molybdenum cofactor guanylyltransferase of Vibrio parahaemolyticus serotype O3:K6 (strain RIMD 2210633).